A 255-amino-acid chain; its full sequence is Hydroxyacylglutathione hydrolase (255 aa).

Zn(2+)-binding residues include His-56, His-58, Asp-60, His-61, His-112, Asp-129, and His-167.

Belongs to the metallo-beta-lactamase superfamily. Glyoxalase II family. As to quaternary structure, monomer. It depends on Zn(2+) as a cofactor.

The catalysed reaction is an S-(2-hydroxyacyl)glutathione + H2O = a 2-hydroxy carboxylate + glutathione + H(+). It functions in the pathway secondary metabolite metabolism; methylglyoxal degradation; (R)-lactate from methylglyoxal: step 2/2. Thiolesterase that catalyzes the hydrolysis of S-D-lactoyl-glutathione to form glutathione and D-lactic acid. The protein is Hydroxyacylglutathione hydrolase of Pseudomonas fluorescens (strain SBW25).